The sequence spans 173 residues: NADH dehydrogenase [ubiquinone] 1 alpha subcomplex assembly factor 4 (173 aa).

Glycine 2 carries the N-myristoyl glycine lipid modification. A disordered region spans residues 16 to 40; it reads KRAEREISKRKPSMAPKHPSTRDLL. Position 35 is a phosphoserine (serine 35).

The protein belongs to the NDUFAF4 family. Binds calmodulin. Interacts with NDUFAF3. Post-translationally, phosphorylated on serine. Prolactin stimulate serine phosphorylation.

The protein localises to the mitochondrion. The protein resides in the membrane. Functionally, may be involved in cell proliferation and survival of hormone-dependent tumor cells. Involved in the assembly of mitochondrial NADH:ubiquinone oxidoreductase complex (complex I). In Mus musculus (Mouse), this protein is NADH dehydrogenase [ubiquinone] 1 alpha subcomplex assembly factor 4 (Ndufaf4).